The primary structure comprises 318 residues: Fe(3+) dicitrate transport system permease protein FecD (318 aa).

Residues Met1 to Lys2 are Cytoplasmic-facing. Residues Ile3 to Met23 traverse the membrane as a helical segment. The Periplasmic segment spans residues Gly24–Leu55. The helical transmembrane segment at Leu56 to Val76 threads the bilayer. Over Arg77 to Ser105 the chain is Cytoplasmic. A helical transmembrane segment spans residues Leu106–Leu126. Residues Lys127–Lys137 are Periplasmic-facing. Residues Leu138–Leu158 form a helical membrane-spanning segment. Over Ser159 to Asp179 the chain is Cytoplasmic. A helical transmembrane segment spans residues Trp180 to Phe200. The Periplasmic portion of the chain corresponds to Cys201–Arg225. A helical membrane pass occupies residues Phe226–Ile246. The Cytoplasmic portion of the chain corresponds to Ser247–Leu269. Residues Pro270–Ile290 form a helical membrane-spanning segment. The Periplasmic portion of the chain corresponds to His291–Leu294. A helical membrane pass occupies residues Glu295–Val315. Over Arg316 to Arg318 the chain is Cytoplasmic.

Belongs to the binding-protein-dependent transport system permease family. FecCD subfamily. The complex is composed of two ATP-binding proteins (FecE), two transmembrane proteins (FecC and FecD) and a solute-binding protein (FecB). Interacts with FecB.

Its subcellular location is the cell inner membrane. Its function is as follows. Part of the ABC transporter complex FecBCDE involved in citrate-dependent Fe(3+) uptake. Probably responsible for the translocation of the substrate across the membrane. The polypeptide is Fe(3+) dicitrate transport system permease protein FecD (Escherichia coli (strain K12)).